Consider the following 37-residue polypeptide: Conotoxin r11e (37 aa).

4 cysteine pairs are disulfide-bonded: Cys-2/Cys-16, Cys-9/Cys-21, Cys-15/Cys-26, and Cys-20/Cys-33. 2 positions are modified to 4-carboxyglutamate: Glu-13 and Glu-14. Trp-34 is subject to 6'-bromotryptophan.

Expressed by the venom duct.

The protein localises to the secreted. Causes hyperactivity, circular motion, convulsion, urination and death, when injected into 13- to 15-day-old mice. Causes gasping, backward swimming or swimming in a vertical direction and death, when intraperitoneally injected into goldfish. This chain is Conotoxin r11e, found in Conus radiatus (Rayed cone).